The sequence spans 155 residues: uncharacterized protein (155 aa).

Helical transmembrane passes span 2–24, 62–84, 97–116, and 131–148; these read TFLFLILVFIIEILQLSVFPPIF, AVVNFLGFISLLNVVFTYLYLVL, VFLIMPLILLLRKLTIFLVV, and VVLLIDLIFLILLYKVFN.

Its subcellular location is the cell membrane. This is an uncharacterized protein from Aquifex aeolicus (strain VF5).